The following is a 377-amino-acid chain: Citrate synthase (377 aa).

Catalysis depends on residues H220, H259, and D313.

It belongs to the citrate synthase family. In terms of assembly, homodimer.

The enzyme catalyses oxaloacetate + acetyl-CoA + H2O = citrate + CoA + H(+). It functions in the pathway carbohydrate metabolism; tricarboxylic acid cycle; isocitrate from oxaloacetate: step 1/2. Functionally, might regulate the synthesis and function of enzymes involved in later enzymatic steps of Krebs cycle. Loss in activity results in sporulation defect. This Deinococcus radiodurans (strain ATCC 13939 / DSM 20539 / JCM 16871 / CCUG 27074 / LMG 4051 / NBRC 15346 / NCIMB 9279 / VKM B-1422 / R1) protein is Citrate synthase (gltA).